The following is a 469-amino-acid chain: 2-amino-4-ketopentanoate thiolase beta subunit (469 aa).

Lys102 bears the N6-(pyridoxal phosphate)lysine mark. Residues Asn128 and 238 to 242 each bind pyridoxal 5'-phosphate; that span reads AGGGN.

This sequence belongs to the threonine synthase family. In terms of assembly, heterodimer with OrtA. Pyridoxal 5'-phosphate is required as a cofactor.

It carries out the reaction D-alanine + acetyl-CoA = (2R)-2-amino-4-oxopentanoate + CoA. Its activity is regulated as follows. Completely inhibited by p-chloromercuribenzoate (p-ClHgBzO) and acetyl-CoA, and partially inhibited by N-ethylmaleimide. Functionally, involved in the ornithine fermentation pathway. Catalyzes the thiolytic cleavage of 2-amino-4-ketopentanoate (AKP) with coenzyme A (CoA) to form acetyl-CoA and alanine. It is strictly specific for AKP. The chain is 2-amino-4-ketopentanoate thiolase beta subunit from Acetoanaerobium sticklandii (strain ATCC 12662 / DSM 519 / JCM 1433 / CCUG 9281 / NCIMB 10654 / HF) (Clostridium sticklandii).